A 144-amino-acid polypeptide reads, in one-letter code: Large ribosomal subunit protein uL16 (144 aa).

A compositionally biased stretch (basic residues) spans 1–16 (MLVPKRVKHRKVQRGK). The segment at 1–20 (MLVPKRVKHRKVQRGKMRGE) is disordered.

It belongs to the universal ribosomal protein uL16 family. Part of the 50S ribosomal subunit.

Its function is as follows. Binds 23S rRNA and is also seen to make contacts with the A and possibly P site tRNAs. The protein is Large ribosomal subunit protein uL16 of Limosilactobacillus fermentum (strain NBRC 3956 / LMG 18251) (Lactobacillus fermentum).